We begin with the raw amino-acid sequence, 202 residues long: Imidazoleglycerol-phosphate dehydratase (202 aa).

Belongs to the imidazoleglycerol-phosphate dehydratase family.

The protein localises to the cytoplasm. It carries out the reaction D-erythro-1-(imidazol-4-yl)glycerol 3-phosphate = 3-(imidazol-4-yl)-2-oxopropyl phosphate + H2O. It functions in the pathway amino-acid biosynthesis; L-histidine biosynthesis; L-histidine from 5-phospho-alpha-D-ribose 1-diphosphate: step 6/9. This is Imidazoleglycerol-phosphate dehydratase from Parasynechococcus marenigrum (strain WH8102).